The sequence spans 152 residues: Globin CTT-E/E' (152 aa).

Positions 1 to 15 (MKFIILALCVAAASA) are cleaved as a signal peptide. The region spanning 16–152 (LSGDQIGLVQ…AFFGAVFAKM (137 aa)) is the Globin domain. Residues His-73 and His-102 each coordinate heme b.

The protein belongs to the globin family.

The polypeptide is Globin CTT-E/E' (CTT-E) (Chironomus thummi thummi (Midge)).